A 284-amino-acid chain; its full sequence is NAD kinase (284 aa).

D61 (proton acceptor) is an active-site residue. NAD(+) contacts are provided by residues 61–62 (DG), R66, 136–137 (ND), R147, K164, D166, and L201.

Belongs to the NAD kinase family. Requires a divalent metal cation as cofactor.

The protein resides in the cytoplasm. It carries out the reaction NAD(+) + ATP = ADP + NADP(+) + H(+). Its function is as follows. Involved in the regulation of the intracellular balance of NAD and NADP, and is a key enzyme in the biosynthesis of NADP. Catalyzes specifically the phosphorylation on 2'-hydroxyl of the adenosine moiety of NAD to yield NADP. The chain is NAD kinase from Dehalococcoides mccartyi (strain CBDB1).